We begin with the raw amino-acid sequence, 270 residues long: Glutamate racemase (270 aa).

Substrate-binding positions include 7–8 and 39–40; these read DS and YG. Cys-70 serves as the catalytic Proton donor/acceptor. 71–72 serves as a coordination point for substrate; it reads NT. Residue Cys-194 is the Proton donor/acceptor of the active site. 195-196 contributes to the substrate binding site; the sequence is TH.

The protein belongs to the aspartate/glutamate racemases family.

It carries out the reaction L-glutamate = D-glutamate. It functions in the pathway cell wall biogenesis; peptidoglycan biosynthesis. In terms of biological role, provides the (R)-glutamate required for cell wall biosynthesis. The protein is Glutamate racemase of Jannaschia sp. (strain CCS1).